We begin with the raw amino-acid sequence, 388 residues long: 1-deoxy-D-xylulose 5-phosphate reductoisomerase (388 aa).

Thr-10, Gly-11, Thr-12, Ile-13, Arg-37, Gln-38, and Asn-122 together coordinate NADPH. Lys-123 is a binding site for 1-deoxy-D-xylulose 5-phosphate. Glu-124 serves as a coordination point for NADPH. A Mn(2+)-binding site is contributed by Asp-148. The 1-deoxy-D-xylulose 5-phosphate site is built by Ser-149, Glu-150, Ser-179, and His-202. Glu-150 contributes to the Mn(2+) binding site. Gly-208 is a binding site for NADPH. Residues Ser-215, Asn-220, Lys-221, and Glu-224 each contribute to the 1-deoxy-D-xylulose 5-phosphate site. Glu-224 provides a ligand contact to Mn(2+).

It belongs to the DXR family. Requires Mg(2+) as cofactor. Mn(2+) serves as cofactor.

The catalysed reaction is 2-C-methyl-D-erythritol 4-phosphate + NADP(+) = 1-deoxy-D-xylulose 5-phosphate + NADPH + H(+). The protein operates within isoprenoid biosynthesis; isopentenyl diphosphate biosynthesis via DXP pathway; isopentenyl diphosphate from 1-deoxy-D-xylulose 5-phosphate: step 1/6. Its function is as follows. Catalyzes the NADPH-dependent rearrangement and reduction of 1-deoxy-D-xylulose-5-phosphate (DXP) to 2-C-methyl-D-erythritol 4-phosphate (MEP). In Laribacter hongkongensis (strain HLHK9), this protein is 1-deoxy-D-xylulose 5-phosphate reductoisomerase.